The following is a 130-amino-acid chain: Small ribosomal subunit protein uS8 (130 aa).

This sequence belongs to the universal ribosomal protein uS8 family. Part of the 30S ribosomal subunit.

One of the primary rRNA binding proteins, it binds directly to 16S rRNA central domain where it helps coordinate assembly of the platform of the 30S subunit. In Pyrococcus furiosus (strain ATCC 43587 / DSM 3638 / JCM 8422 / Vc1), this protein is Small ribosomal subunit protein uS8.